The sequence spans 269 residues: 2-dehydro-3-deoxyphosphooctonate aldolase (269 aa).

Belongs to the KdsA family.

Its subcellular location is the cytoplasm. It catalyses the reaction D-arabinose 5-phosphate + phosphoenolpyruvate + H2O = 3-deoxy-alpha-D-manno-2-octulosonate-8-phosphate + phosphate. The protein operates within carbohydrate biosynthesis; 3-deoxy-D-manno-octulosonate biosynthesis; 3-deoxy-D-manno-octulosonate from D-ribulose 5-phosphate: step 2/3. It functions in the pathway bacterial outer membrane biogenesis; lipopolysaccharide biosynthesis. This chain is 2-dehydro-3-deoxyphosphooctonate aldolase, found in Chlamydia felis (strain Fe/C-56) (Chlamydophila felis).